A 178-amino-acid chain; its full sequence is C-phycoerythrin class 2 subunit beta (178 aa).

Phycourobilin contacts are provided by C50 and C61. The (2R,3E)-phycoerythrobilin site is built by C82 and C159.

Belongs to the phycobiliprotein family. As to quaternary structure, heterodimer of an alpha and a beta chain. Post-translationally, contains two covalently linked phycoerythrobilin chromophores and one covalently linked phycourobilin chromophore.

It is found in the cellular thylakoid membrane. Its function is as follows. Light-harvesting photosynthetic bile pigment-protein from the phycobiliprotein complex. This Synechococcus sp. (strain WH8103) protein is C-phycoerythrin class 2 subunit beta (mpeB).